Reading from the N-terminus, the 397-residue chain is Enoyl-[acyl-carrier-protein] reductase [NADH] (397 aa).

Residues 48–53 (GASTGY), 74–75 (FE), 111–112 (DA), and 139–140 (AA) each bind NAD(+). Tyr225 is a binding site for substrate. Residue Tyr235 is the Proton donor of the active site. NAD(+) contacts are provided by residues Lys244 and 273-275 (VVT).

It belongs to the TER reductase family. In terms of assembly, monomer.

The enzyme catalyses a 2,3-saturated acyl-[ACP] + NAD(+) = a (2E)-enoyl-[ACP] + NADH + H(+). It functions in the pathway lipid metabolism; fatty acid biosynthesis. Functionally, involved in the final reduction of the elongation cycle of fatty acid synthesis (FAS II). Catalyzes the reduction of a carbon-carbon double bond in an enoyl moiety that is covalently linked to an acyl carrier protein (ACP). The sequence is that of Enoyl-[acyl-carrier-protein] reductase [NADH] from Burkholderia pseudomallei (strain 1710b).